Consider the following 675-residue polypeptide: Vitamin K-dependent protein S (675 aa).

The signal sequence occupies residues 1–24; it reads MRVLSARFRVLLACLALVIPVSET. The propeptide occupies 25–41; that stretch reads NFLSKERASQVLVRKRR. A Gla domain is found at 42-87; it reads ANTLFEETMKGNLERECIEELCNKEEAREVFENNPETDYFYPKYLG. 11 positions are modified to 4-carboxyglutamate: Glu47, Glu48, Glu55, Glu57, Glu60, Glu61, Glu66, Glu67, Glu70, Glu73, and Glu77. A disulfide bridge links Cys58 with Cys63. The interval 88–116 is thrombin-sensitive; that stretch reads CLGAFRVGSFHAARQSANAYPDLRSCVKA. Residues 117 to 155 form the EGF-like 1 domain; the sequence is ISDQCDPIPCNEDGYLACQDGQAAFTCFCKPGWQGDRCQ. Cystine bridges form between Cys121–Cys134, Cys126–Cys143, Cys145–Cys154, Cys161–Cys175, Cys171–Cys184, Cys186–Cys199, Cys205–Cys217, Cys212–Cys226, Cys228–Cys241, Cys247–Cys256, Cys252–Cys265, Cys267–Cys282, and Cys449–Cys475. The residue at position 136 (Asp136) is a (3R)-3-hydroxyaspartate. One can recognise an EGF-like 2; calcium-binding domain in the interval 157–200; sequence DVNECKDPSNVNGGCSQICDNTPGSYHCSCKRGFAMLPNKKDCK. In terms of domain architecture, EGF-like 3; calcium-binding spans 201–242; sequence DLDECALKPSVCGTAVCKNIPGDFECECPDGYRYDPSSKSCK. In terms of domain architecture, EGF-like 4; calcium-binding spans 243–283; sequence DVDECSENMCAQLCVNFPGGYSCYCDGKKGFKLAQDQKSCE. Laminin G-like domains follow at residues 299–475 and 484–665; these read LLYL…NKHC and YYPG…AHSC. 2 N-linked (GlcNAc...) asparagine glycosylation sites follow: Asn499 and Asn509. Cys638 and Cys665 are disulfide-bonded.

Post-translationally, the iron and 2-oxoglutarate dependent 3-hydroxylation of aspartate and asparagine is (R) stereospecific within EGF domains. In terms of tissue distribution, plasma.

The protein resides in the secreted. Functionally, anticoagulant plasma protein; it is a cofactor to activated protein C in the degradation of coagulation factors Va and VIIIa. It helps to prevent coagulation and stimulating fibrinolysis. In Mus musculus (Mouse), this protein is Vitamin K-dependent protein S (Pros1).